We begin with the raw amino-acid sequence, 247 residues long: Oil body-associated protein 2A (247 aa).

The interval 1-26 (MASSDERPGAYPARDGSENLPPGDPK) is disordered.

This sequence belongs to the OBAP family.

The protein is Oil body-associated protein 2A of Arabidopsis thaliana (Mouse-ear cress).